The chain runs to 130 residues: Small ribosomal subunit protein uS8 (130 aa).

It belongs to the universal ribosomal protein uS8 family. In terms of assembly, part of the 30S ribosomal subunit.

In terms of biological role, one of the primary rRNA binding proteins, it binds directly to 16S rRNA central domain where it helps coordinate assembly of the platform of the 30S subunit. This Halorubrum lacusprofundi (strain ATCC 49239 / DSM 5036 / JCM 8891 / ACAM 34) protein is Small ribosomal subunit protein uS8.